We begin with the raw amino-acid sequence, 305 residues long: Hydrogen peroxide-inducible genes activator (305 aa).

Residues 1–58 (MNIRDLEYLVALAEHRHFRRAADSCHVSQPTLSGQIRKLEDELGVMLLERTSRKVLFT) form the HTH lysR-type domain. The H-T-H motif DNA-binding region spans 18 to 37 (FRRAADSCHVSQPTLSGQIR). Cystine bridges form between Cys-180–Cys-259 and Cys-199–Cys-208. Position 199 is a cysteine sulfenic acid (-SOH); alternate (Cys-199). S-glutathionyl cysteine; alternate is present on Cys-199. The residue at position 199 (Cys-199) is an S-nitrosocysteine; alternate.

It belongs to the LysR transcriptional regulatory family. Homodimer and homotetramer. Post-translationally, oxidized on Cys-199; the Cys-SOH formed in response to oxidative signaling triggers a conformational change and the onset of transcriptional activity with a specific DNA-binding affinity. Cys-199-SOH rapidly reacts with Cys-208-SH to form a disulfide bond. In terms of processing, S-nitrosylation in response to nitrosative signaling triggers a conformational change and the onset of transcriptional activity with a specific DNA-binding affinity. Glutathionylation in response to redox signaling triggers the onset of transcriptional activity with a specific DNA-binding affinity.

Its activity is regulated as follows. Activated by oxidation of Cys-199 resulting in the alternative formation of cystine, sulfenic acid, S-nitroso- or glutathione-bound cysteine. Functionally, hydrogen peroxide sensor. Activates the expression of a regulon of hydrogen peroxide-inducible genes such as katG, gor, ahpC, ahpF, oxyS (a regulatory RNA), dps, fur and grxA. OxyR expression is negatively autoregulated by binding to a 43 bp region upstream of its own coding sequence. OxyR is inactivated by reduction of its essential disulfide bond by the product of GrxA, itself positively regulated by OxyR. Also has a positive regulatory effect on the production of surface proteins that control the colony morphology and auto-aggregation ability. This Escherichia coli O157:H7 protein is Hydrogen peroxide-inducible genes activator (oxyR).